Here is a 133-residue protein sequence, read N- to C-terminus: Sec-independent protein translocase protein TatB (133 aa).

The helical transmembrane segment at M1 to G21 threads the bilayer. Positions E67–E133 are disordered. Polar residues predominate over residues G70–S84. The span at A97–E116 shows a compositional bias: low complexity.

The protein belongs to the TatB family. The Tat system comprises two distinct complexes: a TatABC complex, containing multiple copies of TatA, TatB and TatC subunits, and a separate TatA complex, containing only TatA subunits. Substrates initially bind to the TatABC complex, which probably triggers association of the separate TatA complex to form the active translocon.

It localises to the cell inner membrane. Functionally, part of the twin-arginine translocation (Tat) system that transports large folded proteins containing a characteristic twin-arginine motif in their signal peptide across membranes. Together with TatC, TatB is part of a receptor directly interacting with Tat signal peptides. TatB may form an oligomeric binding site that transiently accommodates folded Tat precursor proteins before their translocation. The polypeptide is Sec-independent protein translocase protein TatB (Vibrio cholerae serotype O1 (strain ATCC 39315 / El Tor Inaba N16961)).